The primary structure comprises 314 residues: MSKMTPQEMAQTIGSGLLSFPVTPFKADYSFDEATYRANMDWLCGYDVAGLFAAGGTGEFFSLTPTEVPQIVKIAVEETKGRVPVLAGTGYGTAIAREIAVGAEKAGADGLLLLPPYLTHSEQDGLAAHVEAVCAAVKIGVIVYNRDNAILQPDTLARLAERCPNLVGYKDGIGDIELMTRVYTKLGDRLTYIGGLPTAETFALPYLDMGVTTYSSAVFNFVPEFATNFYAAVRKRDHATIHAGLKDFILPLIAIRNRKKGYAVSIIKAGMKVIGRDSGPVRPPLTDLTEQEIAELTALVKKLPAIRSSQQAAE.

The protein belongs to the DapA family.

The enzyme catalyses 5-dehydro-4-deoxy-D-glucarate + H(+) = 2,5-dioxopentanoate + CO2 + H2O. Its pathway is carbohydrate acid metabolism; D-glucarate degradation; 2,5-dioxopentanoate from D-glucarate: step 2/2. The polypeptide is Probable 5-dehydro-4-deoxyglucarate dehydratase (Bradyrhizobium diazoefficiens (strain JCM 10833 / BCRC 13528 / IAM 13628 / NBRC 14792 / USDA 110)).